We begin with the raw amino-acid sequence, 496 residues long: Ganglioside-induced differentiation-associated protein 2 (496 aa).

Residues Glu-25–Pro-48 are disordered. The Macro domain maps to His-44–Phe-224. Residues Asp-329–Asn-483 enclose the CRAL-TRIO domain.

It belongs to the GDAP2 family.

This is Ganglioside-induced differentiation-associated protein 2 from Xenopus laevis (African clawed frog).